Reading from the N-terminus, the 200-residue chain is ATP-dependent Clp protease proteolytic subunit (200 aa).

The Nucleophile role is filled by serine 104. Histidine 129 is a catalytic residue.

This sequence belongs to the peptidase S14 family. Fourteen ClpP subunits assemble into 2 heptameric rings which stack back to back to give a disk-like structure with a central cavity, resembling the structure of eukaryotic proteasomes.

The protein localises to the cytoplasm. The catalysed reaction is Hydrolysis of proteins to small peptides in the presence of ATP and magnesium. alpha-casein is the usual test substrate. In the absence of ATP, only oligopeptides shorter than five residues are hydrolyzed (such as succinyl-Leu-Tyr-|-NHMec, and Leu-Tyr-Leu-|-Tyr-Trp, in which cleavage of the -Tyr-|-Leu- and -Tyr-|-Trp bonds also occurs).. In terms of biological role, cleaves peptides in various proteins in a process that requires ATP hydrolysis. Has a chymotrypsin-like activity. Plays a major role in the degradation of misfolded proteins. The sequence is that of ATP-dependent Clp protease proteolytic subunit from Rubrobacter xylanophilus (strain DSM 9941 / JCM 11954 / NBRC 16129 / PRD-1).